The primary structure comprises 474 residues: Trichothecene 3-O-acetyltransferase (474 aa).

Belongs to the trichothecene 3-O-acetyltransferase family.

In terms of biological role, trichothecene 3-O-acetyltransferase involved in self-protection against trichothecenes, mycotoxins acting as eukaryotic protein synthesis inhibitors. Its existence is surprising in a non-trichothecene producer organism which needs no self-protection again endogenic trichothecenes. The persistence of this non-essential gene may be due to a selective advantage that it may confer, like a resistance to exogenic trichothecenes. The sequence is that of Trichothecene 3-O-acetyltransferase (AYT1) from Saccharomyces cerevisiae (strain ATCC 204508 / S288c) (Baker's yeast).